Consider the following 396-residue polypeptide: Phosphoglycerate kinase (396 aa).

Substrate is bound by residues 21-23 (DFN), arginine 36, 59-62 (HLGR), arginine 118, and arginine 151. Residues lysine 201, glycine 292, glutamate 323, and 349–352 (GGDS) contribute to the ATP site.

The protein belongs to the phosphoglycerate kinase family. As to quaternary structure, monomer.

The protein resides in the cytoplasm. The enzyme catalyses (2R)-3-phosphoglycerate + ATP = (2R)-3-phospho-glyceroyl phosphate + ADP. Its pathway is carbohydrate degradation; glycolysis; pyruvate from D-glyceraldehyde 3-phosphate: step 2/5. This chain is Phosphoglycerate kinase, found in Leptospira biflexa serovar Patoc (strain Patoc 1 / Ames).